We begin with the raw amino-acid sequence, 141 residues long: MIVSVLFIIFVGLGGGITVGAGFVAFLTVMGIIPRLMQLTKTMRFVQAYEAAVILGAVCGGWETLHMNHLYLTKWIAVPVGLLAGLFVGMLAAALTEVLNVLPILAKRIGLRSKIIILLMAIVIGKIAGSLFHWLYFIDHS.

Transmembrane regions (helical) follow at residues 7-27, 45-65, 75-95, and 115-135; these read FIIF…VAFL, FVQA…WETL, WIAV…AAAL, and IIIL…FHWL.

The protein localises to the cell membrane. The polypeptide is Stage V sporulation protein AB (spoVAB) (Bacillus subtilis (strain 168)).